Reading from the N-terminus, the 360-residue chain is Probable mannan endo-1,4-beta-mannosidase A (360 aa).

The signal sequence occupies residues 1 to 18 (MKLSQILTFASLLSGALA). Residues Asn-142 and Asn-178 each contribute to the substrate site. Glu-179 serves as the catalytic Proton donor. Residue Tyr-254 coordinates substrate. Glu-287 (nucleophile) is an active-site residue. N-linked (GlcNAc...) asparagine glycosylation occurs at Asn-307. Position 317 (Trp-317) interacts with substrate.

The protein belongs to the glycosyl hydrolase 5 (cellulase A) family.

The protein resides in the secreted. The catalysed reaction is Random hydrolysis of (1-&gt;4)-beta-D-mannosidic linkages in mannans, galactomannans and glucomannans.. Endo-1,4-mannanase, a crucial enzyme for depolymerization of seed galactomannans and wood galactoglucomannans. This chain is Probable mannan endo-1,4-beta-mannosidase A (manA), found in Aspergillus clavatus (strain ATCC 1007 / CBS 513.65 / DSM 816 / NCTC 3887 / NRRL 1 / QM 1276 / 107).